We begin with the raw amino-acid sequence, 378 residues long: Protein RecA (378 aa).

Position 79–86 (79–86 (GPESSGKT)) interacts with ATP.

Belongs to the RecA family.

It is found in the cytoplasm. Functionally, can catalyze the hydrolysis of ATP in the presence of single-stranded DNA, the ATP-dependent uptake of single-stranded DNA by duplex DNA, and the ATP-dependent hybridization of homologous single-stranded DNAs. It interacts with LexA causing its activation and leading to its autocatalytic cleavage. This is Protein RecA from Streptococcus pyogenes serotype M28 (strain MGAS6180).